We begin with the raw amino-acid sequence, 21 residues long: GGPSQKQKQHKVNLVNIKVYI.

The protein belongs to the tyrosinase family. Hemocyanin subfamily. In terms of tissue distribution, hemolymph.

The protein localises to the secreted. Its subcellular location is the extracellular space. Hemocyanins are copper-containing oxygen carriers occurring freely dissolved in the hemolymph of many mollusks and arthropods. The sequence is that of Hemocyanin subunit 6 from Maja squinado (Mediterranean spider crab).